The following is a 309-amino-acid chain: Calponin-2 (309 aa).

N-acetylserine is present on S2. N6-acetyllysine is present on residues K8 and K25. The Calponin-homology (CH) domain occupies 28-132; the sequence is PQKEAELRSW…SLLALAGKAK (105 aa). S138 is subject to Phosphoserine. Calponin-like repeat units follow at residues 166 to 191, 206 to 231, and 245 to 269; these read IGLQ…RHLY, ISLQ…RHIY, and MSLQ…RQIY. Residues 273 to 309 form a disordered region; sequence YCPQGPAADGAPAAAGDGPGPGEPSECPPYYQEEAGY. The segment covering 277 to 288 has biased composition (low complexity); sequence GPAADGAPAAAG.

This sequence belongs to the calponin family.

Thin filament-associated protein that is implicated in the regulation and modulation of smooth muscle contraction. It is capable of binding to actin, calmodulin and tropomyosin. The interaction of calponin with actin inhibits the actomyosin Mg-ATPase activity. The polypeptide is Calponin-2 (CNN2) (Bos taurus (Bovine)).